Reading from the N-terminus, the 850-residue chain is Polyhomeotic-like protein 2 (850 aa).

Disordered regions lie at residues 1–79 (MENE…QYLQ), 233–314 (QQTP…RAVP), 335–386 (LPQP…DHAL), 402–436 (THVHKPGNSQQCHLPTLDTGSQNGHPEGGSHPPQR), and 528–553 (MTSGNGNSASSIAGTAPQNGENKPPQ). The segment covering 15-32 (SVTTNTSGTNSSSGCISS) has biased composition (low complexity). Residues 33–56 (SGGGGGSGGRPTAPQISVYSGIPD) form an interaction with BMI1 region. Low complexity predominate over residues 343-352 (PQPQFVAQQQ). 2 stretches are compositionally biased toward polar residues: residues 368-380 (LASVSPSLALQSS) and 402-425 (THVHKPGNSQQCHLPTLDTGSQNG). Residues 529–543 (TSGNGNSASSIAGTA) show a composition bias toward low complexity. The HD1 motif lies at 550–579 (KPPQAIVKPQILTHVIEGFVIQEGAEPFPV). Glycyl lysine isopeptide (Lys-Gly) (interchain with G-Cter in SUMO2) cross-links involve residues Lys-590 and Lys-592. The tract at residues 597–624 (FLPEKPPQQDHTTTTDSEMEEPYLQESK) is disordered. Thr-611 is modified (phosphothreonine). The residue at position 613 (Ser-613) is a Phosphoserine. Lys-624 participates in a covalent cross-link: Glycyl lysine isopeptide (Lys-Gly) (interchain with G-Cter in SUMO2). Residues 625–659 (EEGTPLKLKCELCGRVDFAYKFKRSKRFCSMACAK) form an FCS-type zinc finger. Zn(2+)-binding residues include Cys-634, Cys-637, Cys-653, and Cys-657. 2 disordered regions span residues 676-712 (RSKLQKAGTTTHNRRRASKASLPTLTKDTKKQPSGTV) and 725-764 (SQEDSSRCSDNSSYEEPLSPISASSSTSRRRQGQRDLDLP). A Glycyl lysine isopeptide (Lys-Gly) (interchain with G-Cter in SUMO2) cross-link involves residue Lys-694. The span at 696-712 (SLPTLTKDTKKQPSGTV) shows a compositional bias: polar residues. Position 743 is a phosphoserine (Ser-743). An SAM domain is found at 786–850 (WNVEDVYEFI…YARISMLKDS (65 aa)). Lys-839 participates in a covalent cross-link: Glycyl lysine isopeptide (Lys-Gly) (interchain with G-Cter in SUMO2).

Component of a PRC1-like complex. Interacts with CBX4. Interacts with BMI1, PCGF2, PHC1 and RNF2. Interacts with CHTOP. Interacts with the N-terminal region of the SP1 transcription factor and with MAPKAPK2. Interacts with SAMD7. Interacts with SAMD11. As to expression, isoform 2 is ubiquitously expressed in embryos and adult tissues at much higher level than isoform 1.

It localises to the nucleus. Its function is as follows. Component of a Polycomb group (PcG) multiprotein PRC1-like complex, a complex class required to maintain the transcriptionally repressive state of many genes, including Hox genes, throughout development. PcG PRC1 complex acts via chromatin remodeling and modification of histones; it mediates monoubiquitination of histone H2A 'Lys-119', rendering chromatin heritably changed in its expressibility. The protein is Polyhomeotic-like protein 2 (Phc2) of Mus musculus (Mouse).